Reading from the N-terminus, the 312-residue chain is Putative HTH-type transcriptional regulatory protein Ta1363 (312 aa).

Residues 133–186 form the HTH cro/C1-type domain; it reads LREMRMKMSLSIGYLSHYLGVSRRSVSLYENGSSATIDVFLKLQEIIKSDLVDH. The H-T-H motif DNA-binding region spans 144 to 163; it reads IGYLSHYLGVSRRSVSLYEN.

The sequence is that of Putative HTH-type transcriptional regulatory protein Ta1363 from Thermoplasma acidophilum (strain ATCC 25905 / DSM 1728 / JCM 9062 / NBRC 15155 / AMRC-C165).